The following is a 310-amino-acid chain: Acetyl-coenzyme A carboxylase carboxyl transferase subunit beta, chloroplastic (310 aa).

The CoA carboxyltransferase N-terminal domain occupies Leu-47–Asn-310. Positions 51, 54, 70, and 73 each coordinate Zn(2+). The C4-type zinc finger occupies Cys-51–Cys-73.

It belongs to the AccD/PCCB family. Acetyl-CoA carboxylase is a heterohexamer composed of biotin carboxyl carrier protein, biotin carboxylase and 2 subunits each of ACCase subunit alpha and ACCase plastid-coded subunit beta (accD). Requires Zn(2+) as cofactor.

It localises to the plastid. The protein localises to the chloroplast stroma. It catalyses the reaction N(6)-carboxybiotinyl-L-lysyl-[protein] + acetyl-CoA = N(6)-biotinyl-L-lysyl-[protein] + malonyl-CoA. Its pathway is lipid metabolism; malonyl-CoA biosynthesis; malonyl-CoA from acetyl-CoA: step 1/1. Component of the acetyl coenzyme A carboxylase (ACC) complex. Biotin carboxylase (BC) catalyzes the carboxylation of biotin on its carrier protein (BCCP) and then the CO(2) group is transferred by the transcarboxylase to acetyl-CoA to form malonyl-CoA. This Adiantum capillus-veneris (Maidenhair fern) protein is Acetyl-coenzyme A carboxylase carboxyl transferase subunit beta, chloroplastic.